Here is a 104-residue protein sequence, read N- to C-terminus: uncharacterized protein (104 aa).

2 helical membrane passes run 16–36 (LAFFYIIDGAIIALMLVLASY) and 44–64 (GGFGRIMFYVLFGTFGLFLCI).

The protein resides in the cell membrane. This is an uncharacterized protein from Bacillus anthracis.